The following is a 153-amino-acid chain: UPF0756 membrane protein LCA_1031 (153 aa).

4 helical membrane-spanning segments follow: residues 4–24 (WLFL…SLII), 52–72 (WGVT…QIGF), 85–105 (FIAV…VGLL), and 115–135 (LVFG…GPVI).

The protein belongs to the UPF0756 family.

Its subcellular location is the cell membrane. The protein is UPF0756 membrane protein LCA_1031 of Latilactobacillus sakei subsp. sakei (strain 23K) (Lactobacillus sakei subsp. sakei).